The chain runs to 580 residues: Potassium-transporting ATPase potassium-binding subunit (580 aa).

10 helical membrane-spanning segments follow: residues 3–23 (ASGA…SVPL), 65–85 (DYAF…YALQ), 136–156 (GLGV…VALI), 179–199 (LYIL…QGVV), 263–283 (LSNF…CHTF), 293–313 (GWAV…ACVA), 399–419 (GLYG…LMVG), 436–456 (MASL…AIAV), 504–524 (AIGV…LALA), and 546–566 (LFVG…FVPA).

The protein belongs to the KdpA family. As to quaternary structure, the system is composed of three essential subunits: KdpA, KdpB and KdpC.

Its subcellular location is the cell inner membrane. Functionally, part of the high-affinity ATP-driven potassium transport (or Kdp) system, which catalyzes the hydrolysis of ATP coupled with the electrogenic transport of potassium into the cytoplasm. This subunit binds the periplasmic potassium ions and delivers the ions to the membrane domain of KdpB through an intramembrane tunnel. The sequence is that of Potassium-transporting ATPase potassium-binding subunit from Sorangium cellulosum (strain So ce56) (Polyangium cellulosum (strain So ce56)).